The primary structure comprises 269 residues: Malonyl-[acyl-carrier protein] O-methyltransferase (269 aa).

It belongs to the methyltransferase superfamily.

The catalysed reaction is malonyl-[ACP] + S-adenosyl-L-methionine = malonyl-[ACP] methyl ester + S-adenosyl-L-homocysteine. The protein operates within cofactor biosynthesis; biotin biosynthesis. Its function is as follows. Converts the free carboxyl group of a malonyl-thioester to its methyl ester by transfer of a methyl group from S-adenosyl-L-methionine (SAM). It allows to synthesize pimeloyl-ACP via the fatty acid synthetic pathway. This is Malonyl-[acyl-carrier protein] O-methyltransferase from Bacillus cereus (strain ATCC 14579 / DSM 31 / CCUG 7414 / JCM 2152 / NBRC 15305 / NCIMB 9373 / NCTC 2599 / NRRL B-3711).